Reading from the N-terminus, the 208-residue chain is FMN-dependent NADH:quinone oxidoreductase 2 (208 aa).

This sequence belongs to the azoreductase type 1 family. Homodimer. FMN is required as a cofactor.

The catalysed reaction is 2 a quinone + NADH + H(+) = 2 a 1,4-benzosemiquinone + NAD(+). It carries out the reaction N,N-dimethyl-1,4-phenylenediamine + anthranilate + 2 NAD(+) = 2-(4-dimethylaminophenyl)diazenylbenzoate + 2 NADH + 2 H(+). Functionally, quinone reductase that provides resistance to thiol-specific stress caused by electrophilic quinones. In terms of biological role, also exhibits azoreductase activity. Catalyzes the reductive cleavage of the azo bond in aromatic azo compounds to the corresponding amines. This Bacillus anthracis protein is FMN-dependent NADH:quinone oxidoreductase 2.